The sequence spans 262 residues: Proliferating cell nuclear antigen (262 aa).

A DNA-binding region spans residues 61-80 (RCDRNIAMGVNLNSMSKILK). Residue K164 forms a Glycyl lysine isopeptide (Lys-Gly) (interchain with G-Cter in ubiquitin) linkage.

This sequence belongs to the PCNA family. In terms of assembly, homotrimer. Forms a complex with activator 1 heteropentamer in the presence of ATP. Component of the replisome complex. Monoubiquitinated by the UBE2B-RAD18 complex on Lys-164. Monoubiquitination at Lys-164 also takes place in undamaged proliferating cells, and is mediated by the DCX(DTL) complex, leading to enhance PCNA-dependent translesion DNA synthesis.

It is found in the nucleus. This protein is an auxiliary protein of DNA polymerase delta and is involved in the control of eukaryotic DNA replication by increasing the polymerase's processibility during elongation of the leading strand. In Coturnix japonica (Japanese quail), this protein is Proliferating cell nuclear antigen (PCNA).